A 154-amino-acid chain; its full sequence is Small ribosomal subunit protein uS15 (154 aa).

The disordered stretch occupies residues 1 to 23; the sequence is MNKKRDKGQSHSTRPARAGPPRW.

This sequence belongs to the universal ribosomal protein uS15 family. As to quaternary structure, part of the 30S ribosomal subunit.

This is Small ribosomal subunit protein uS15 from Staphylothermus marinus (strain ATCC 43588 / DSM 3639 / JCM 9404 / F1).